Reading from the N-terminus, the 121-residue chain is UPF0102 protein DSY2577 (121 aa).

Belongs to the UPF0102 family.

In Desulfitobacterium hafniense (strain Y51), this protein is UPF0102 protein DSY2577.